The sequence spans 142 residues: Transcriptional regulator MraZ (142 aa).

SpoVT-AbrB domains lie at 5–47 and 76–119; these read EYPY…PLAS and ANKA…NPGR.

It belongs to the MraZ family. In terms of assembly, forms oligomers.

Its subcellular location is the cytoplasm. The protein localises to the nucleoid. The protein is Transcriptional regulator MraZ of Deinococcus deserti (strain DSM 17065 / CIP 109153 / LMG 22923 / VCD115).